Here is a 546-residue protein sequence, read N- to C-terminus: Glucose-6-phosphate isomerase (546 aa).

Glu-356 functions as the Proton donor in the catalytic mechanism. Catalysis depends on residues His-387 and Lys-507.

Belongs to the GPI family.

It localises to the cytoplasm. It catalyses the reaction alpha-D-glucose 6-phosphate = beta-D-fructose 6-phosphate. The protein operates within carbohydrate biosynthesis; gluconeogenesis. Its pathway is carbohydrate degradation; glycolysis; D-glyceraldehyde 3-phosphate and glycerone phosphate from D-glucose: step 2/4. Its function is as follows. Catalyzes the reversible isomerization of glucose-6-phosphate to fructose-6-phosphate. The chain is Glucose-6-phosphate isomerase from Syntrophus aciditrophicus (strain SB).